The primary structure comprises 264 residues: Apolipoprotein A-I (264 aa).

A signal peptide spans 1–18 (MKAVVLTVAVLFLTGSQA). Tandem repeats lie at residues 67-88 (LKLL…EQIG) and 89-110 (PVSQ…QEMN). The segment at 67–264 (LKLLDNWDSL…DEATKKLNTQ (198 aa)) is 10 X approximate tandem repeats. Met109 is modified (methionine sulfoxide). Residues 111 to 121 (KDLEEVKRKVQ) form a 3; half-length repeat. 3 consecutive repeat copies span residues 122-143 (PYLD…QQVE), 144-165 (PLSK…EKLS), and 166-187 (PLGQ…THLA). One copy of the 7; truncated repeat lies at 188–207 (PYSDELRQRLAARLEALKEG). Repeat 8 spans residues 208-229 (SSFAEYQAKATEHLSALGEKAK). A 9; half-length repeat occupies 230-240 (PALEDLRQGLL). Repeat unit 10 spans residues 241-264 (PVLESLKLSFWSAVDEATKKLNTQ).

Belongs to the apolipoprotein A1/A4/E family. Homodimer. Interacts with APOA1BP and CLU. Component of a sperm activating protein complex (SPAP), consisting of APOA1, an immunoglobulin heavy chain, an immunoglobulin light chain and albumin. Interacts with NDRG1. Interacts with SCGB3A2. Interacts with NAXE and YJEFN3. In terms of processing, glycosylated. Post-translationally, palmitoylated. Phosphorylation sites are present in the extracellular medium.

Its subcellular location is the secreted. In terms of biological role, participates in the reverse transport of cholesterol from tissues to the liver for excretion by promoting cholesterol efflux from tissues and by acting as a cofactor for the lecithin cholesterol acyltransferase (LCAT). As part of the SPAP complex, activates spermatozoa motility. This Ictidomys tridecemlineatus (Thirteen-lined ground squirrel) protein is Apolipoprotein A-I (APOA1).